The sequence spans 238 residues: Protein CPn_0658/CP_0089/CPj0658/CpB0684 (238 aa).

Belongs to the chlamydial CPn_0658/CT_538/TC_0825 family.

The polypeptide is Protein CPn_0658/CP_0089/CPj0658/CpB0684 (Chlamydia pneumoniae (Chlamydophila pneumoniae)).